The sequence spans 31 residues: Dermaseptin-7.2TR (31 aa).

Glu-31 carries the post-translational modification Glutamic acid 1-amide.

Expressed by the skin glands.

The protein localises to the secreted. Its function is as follows. Has antimicrobial activity. This Phyllomedusa trinitatis (Trinidad leaf frog) protein is Dermaseptin-7.2TR.